Here is a 142-residue protein sequence, read N- to C-terminus: ATP synthase epsilon chain (142 aa).

The protein belongs to the ATPase epsilon chain family. As to quaternary structure, F-type ATPases have 2 components, CF(1) - the catalytic core - and CF(0) - the membrane proton channel. CF(1) has five subunits: alpha(3), beta(3), gamma(1), delta(1), epsilon(1). CF(0) has three main subunits: a, b and c.

The protein localises to the cell inner membrane. Functionally, produces ATP from ADP in the presence of a proton gradient across the membrane. The chain is ATP synthase epsilon chain from Shewanella frigidimarina (strain NCIMB 400).